A 261-amino-acid polypeptide reads, in one-letter code: Cathepsin G (261 aa).

Positions 1–18 are cleaved as a signal peptide; it reads MQPLLLLLTFILLQGDEA. The propeptide at 19 to 20 is activation peptide; sequence GK. An important for antimicrobial activity region spans residues 21-25; the sequence is IIGGR. One can recognise a Peptidase S1 domain in the interval 21 to 243; the sequence is IIGGREARPH…FMPWIKRTMR (223 aa). Cys-49 and Cys-65 are oxidised to a cystine. His-64 acts as the Charge relay system in catalysis. The N-linked (GlcNAc...) asparagine glycan is linked to Asn-71. The important for antimicrobial activity stretch occupies residues 97 to 111; the sequence is HPDYNPQNIRNDIML. Asp-108 serves as the catalytic Charge relay system. Intrachain disulfides connect Cys-142-Cys-207 and Cys-172-Cys-186. Catalysis depends on Ser-201, which acts as the Charge relay system.

The protein belongs to the peptidase S1 family. In terms of tissue distribution, in adult, detected only in bone marrow where expression is restricted to a small population of early myeloid cells.

The protein localises to the cell membrane. Its subcellular location is the cytoplasmic granule. The protein resides in the secreted. It localises to the cytoplasm. It is found in the cytosol. The protein localises to the lysosome. Its subcellular location is the nucleus. The enzyme catalyses Specificity similar to chymotrypsin C.. Its activity is regulated as follows. Inhibited by chymostatin, phenylmethanesulfonyl fluoride and diisopropyl fluorophosphate. Its function is as follows. Serine protease with trypsin- and chymotrypsin-like specificity. Also displays antibacterial activity against Gram-negative and Gram-positive bacteria independent of its protease activity. Prefers Phe and Tyr residues in the P1 position of substrates but also cleaves efficiently after Trp and Leu. Shows a preference for negatively charged amino acids in the P2' position and for aliphatic amino acids both upstream and downstream of the cleavage site. Required for recruitment and activation of platelets which is mediated by the F2RL3/PAR4 platelet receptor. Binds reversibly to and stimulates B cells and CD4(+) and CD8(+) T cells. Also binds reversibly to natural killer (NK) cells and enhances NK cell cytotoxicity through its protease activity. Cleaves complement C3. Cleaves vimentin. Cleaves thrombin receptor F2R/PAR1. Cleaves the synovial mucin-type protein PRG4/lubricin. Cleaves and activates IL36G which promotes expression of chemokines CXCL1 and CXLC8 in keratinocytes. Cleaves IL33 into mature forms which have greater activity than the unprocessed form. Cleaves coagulation factor F8 to produce a partially activated form. Also cleaves and activates coagulation factor F10. Cleaves leukocyte cell surface protein SPN/CD43 to release its extracellular domain and trigger its intramembrane proteolysis by gamma-secretase, releasing the CD43 cytoplasmic tail chain (CD43-ct) which translocates to the nucleus. During apoptosis, cleaves SMARCA2/BRM to produce a 160 kDa cleavage product which localizes to the cytosol. Cleaves MBP in B cell lysosomes at '221-Phe-|-Lys-222', degrading the major immunogenic MBP epitope and preventing the activation of MBP-specific autoreactive T cells. Cleaves annexin ANXA1 and antimicrobial peptide CAMP to produce peptides which act on neutrophil N-formyl peptide receptors to enhance the release of CXCL2. Acts as a ligand for the N-formyl peptide receptor FPR1, enhancing phagocyte chemotaxis. Has antibacterial activity against the Gram-negative bacteria N.gonorrhoeae and P.aeruginosa. Likely to act against N.gonorrhoeae by interacting with N.gonorrhoeae penA/PBP2. Exhibits potent antimicrobial activity against the Gram-positive bacterium L.monocytogenes. Has antibacterial activity against the Gram-positive bacterium S.aureus and degrades S.aureus biofilms, allowing polymorphonuclear leukocytes to penetrate the biofilm and phagocytose bacteria. Has antibacterial activity against M.tuberculosis. Induces platelet aggregation which is strongly potentiated in the presence of ELANE. The sequence is that of Cathepsin G (Ctsg) from Mus musculus (Mouse).